The following is a 337-amino-acid chain: MNSWDAGLAGLLVGTIGVSLLSNGLVLLCLLHSADIRRQAPALFTLNLTCGNLLCTVVNMPLTLAGVVAQRQPAGDRLCRLAAFLDTFLAANSMLSMAALSIDRWVAVVFPLSYRAKMRLRDAAFMVAYTWLHALTFPATALALSWLGFHQLYASCTLCSRRPDERLRFAVFTSAFHALSFLLSFIVLCFTYLKVLKVARFHCKRIDVITMQTLVLLVDIHPSVRERCLEEQKRRRQRATKKISTFIGTFLVCFAPYVITRLVELFSTAPIDSHWGVLSKCLAYSKAASDPFVYSLLRHQYRRSCKELLNRIFNRRSIHSVGLTGDSHSQNILPVSE.

Residues 1–10 are Extracellular-facing; that stretch reads MNSWDAGLAG. A helical membrane pass occupies residues 11 to 31; that stretch reads LLVGTIGVSLLSNGLVLLCLL. Residues 32 to 47 are Cytoplasmic-facing; sequence HSADIRRQAPALFTLN. The helical transmembrane segment at 48 to 68 threads the bilayer; the sequence is LTCGNLLCTVVNMPLTLAGVV. Topologically, residues 69–81 are extracellular; sequence AQRQPAGDRLCRL. Cysteines 79 and 156 form a disulfide. A helical transmembrane segment spans residues 82–102; sequence AAFLDTFLAANSMLSMAALSI. The Cytoplasmic portion of the chain corresponds to 103–123; it reads DRWVAVVFPLSYRAKMRLRDA. A helical transmembrane segment spans residues 124–144; that stretch reads AFMVAYTWLHALTFPATALAL. The Extracellular portion of the chain corresponds to 145 to 168; the sequence is SWLGFHQLYASCTLCSRRPDERLR. The chain crosses the membrane as a helical span at residues 169 to 189; it reads FAVFTSAFHALSFLLSFIVLC. The Cytoplasmic portion of the chain corresponds to 190–245; the sequence is FTYLKVLKVARFHCKRIDVITMQTLVLLVDIHPSVRERCLEEQKRRRQRATKKIST. The helical transmembrane segment at 246 to 266 threads the bilayer; sequence FIGTFLVCFAPYVITRLVELF. Topologically, residues 267–276 are extracellular; that stretch reads STAPIDSHWG. A helical membrane pass occupies residues 277 to 297; that stretch reads VLSKCLAYSKAASDPFVYSLL. Residues 298–337 are Cytoplasmic-facing; sequence RHQYRRSCKELLNRIFNRRSIHSVGLTGDSHSQNILPVSE.

This sequence belongs to the G-protein coupled receptor 1 family. Detected in extracts of several brain regions including striatum, pons, cerebellum and cortex. Not detected in numerous peripheral tissue extracts, except in testis. In the brain, detected in cortical structures including the anterior cingulate area, posterior cingulate and the frontoparietal, somatosensory and piriform cortices. Prominent also in the olfactory tubercle, the islands of Calleja, ventromedial and posterior nuclei of the hypothalamus, the medial septal nucleus, nucleus of the diagonal band and the ventral tegmental area. Localized also to hippocampal structures, with signals strongest over the CA2 and CA3 regions of Ammon's horn and less so over the dentate gyrus. Expressed in the caudate putamen only in its most caudal portion, with a decreasing gradient of signal from the dorsal to ventral aspect. Strong expression associated with a single pontine structure, the inferior olivary nucleus.

The protein resides in the cell membrane. Functionally, orphan receptor. Displays a significant level of constitutive activity. Its effect is mediated by G(s)-alpha protein that stimulate adenylate cyclase, resulting in an elevation of intracellular cAMP. This chain is G-protein coupled receptor 26 (Gpr26), found in Rattus norvegicus (Rat).